Here is a 382-residue protein sequence, read N- to C-terminus: V-type proton ATPase subunit C 1 (382 aa).

Thr2 is subject to N-acetylthreonine.

It belongs to the V-ATPase C subunit family. In terms of assembly, V-ATPase is a heteromultimeric enzyme made up of two complexes: the ATP-hydrolytic V1 complex and the proton translocation V0 complex. The V1 complex consists of three catalytic AB heterodimers that form a heterohexamer, three peripheral stalks each consisting of EG heterodimers, one central rotor including subunits D and F, and the regulatory subunits C and H. The proton translocation complex V0 consists of the proton transport subunit a, a ring of proteolipid subunits c9c'', rotary subunit d, subunits e and f, and the accessory subunits ATP6AP1/Ac45 and ATP6AP2/PRR. Expressed in brain (at protein level).

Its subcellular location is the cytoplasmic vesicle. It localises to the secretory vesicle. The protein resides in the synaptic vesicle membrane. It is found in the clathrin-coated vesicle membrane. Subunit of the V1 complex of vacuolar(H+)-ATPase (V-ATPase), a multisubunit enzyme composed of a peripheral complex (V1) that hydrolyzes ATP and a membrane integral complex (V0) that translocates protons. V-ATPase is responsible for acidifying and maintaining the pH of intracellular compartments and in some cell types, is targeted to the plasma membrane, where it is responsible for acidifying the extracellular environment. Subunit C is necessary for the assembly of the catalytic sector of the enzyme and is likely to have a specific function in its catalytic activity. In Rattus norvegicus (Rat), this protein is V-type proton ATPase subunit C 1 (Atp6v1c1).